A 198-amino-acid polypeptide reads, in one-letter code: Recombination protein RecR (198 aa).

The segment at 57-72 (CSVCCNLTDQDPCQIC) adopts a C4-type zinc-finger fold. The 96-residue stretch at 80-175 (STICVVQEPR…KVTRIARGLP (96 aa)) folds into the Toprim domain.

This sequence belongs to the RecR family.

May play a role in DNA repair. It seems to be involved in an RecBC-independent recombinational process of DNA repair. It may act with RecF and RecO. The sequence is that of Recombination protein RecR from Symbiobacterium thermophilum (strain DSM 24528 / JCM 14929 / IAM 14863 / T).